Here is a 1305-residue protein sequence, read N- to C-terminus: ABC transporter FPSE_09185 (1305 aa).

N-linked (GlcNAc...) asparagine glycosylation occurs at N28. Transmembrane regions (helical) follow at residues 44–64 (FCVYVVGALASIGVGVTMPLM), 99–119 (LYIVGLFLGRWLLNSINKFCF), 172–192 (RLGTFVTYVSTIIAAIAVAFT), 199–219 (IVSASLLVYIAIIIAIVVPIY), 277–297 (IIGAQTGLVFFGIFGVFGLAF), and 312–332 (VGVVIIVLTSVMLILFAFSYL). The region spanning 48-348 (VVGALASIGV…ISQAMVAATE (301 aa)) is the ABC transmembrane type-1 1 domain. An ABC transporter 1 domain is found at 372–663 (LIFKDVTFEY…ENGVYYSLVE (292 aa)). An ATP-binding site is contributed by 407–414 (GPSGSGKS). The segment at 434 to 454 (EAATPRSSKEGERDNHDERKY) is disordered. A compositionally biased stretch (basic and acidic residues) spans 440–454 (SSKEGERDNHDERKY). Residues N468, N507, and N525 are each glycosylated (N-linked (GlcNAc...) asparagine). 6 helical membrane passes run 737–757 (FLLITIASMGVGAATPLQAWL), 780–800 (GFMWLALAGGVGVAYFFQCWI), 851–873 (GVFGLNLASATSSVFTIVGCLII), 877–899 (FGWKLGLVGLCVTVPIMMVSGFW), 964–984 (AVIFGFAESATLGCQALILWY), and 999–1019 (FMVSYMAIINGVEYAGQILGV). One can recognise an ABC transmembrane type-1 2 domain in the interval 738–1025 (LLITIASMGV…ILGVAPSAAQ (288 aa)). The segment at 1038 to 1057 (DSNRSSQEAEKSGPTVEDTD) is disordered. Residues N1040, N1066, and N1075 are each glycosylated (N-linked (GlcNAc...) asparagine). The 239-residue stretch at 1062-1300 (IELCNVSFKY…RGIYWDMCQT (239 aa)) folds into the ABC transporter 2 domain. 1096 to 1103 (GPSGCGKT) contacts ATP. The N-linked (GlcNAc...) asparagine glycan is linked to N1125.

Belongs to the ABC transporter superfamily. ABCB family. Multidrug resistance exporter (TC 3.A.1.201) subfamily.

It is found in the membrane. Functionally, ABC transporter; part of the gene cluster that mediates the biosynthesis of the lipopeptides W493 A and B. W493 A and B consist of six amino acid residues D-allo-thr, L-Ala, D-Ala, L-Gln, D-Tyr, and L-Val/L-Ile linked to a 3-hydroxy-4-methyltetradecanoic acid polyketide chain. May be involved in excretion or internal transport of W493 A and B. The sequence is that of ABC transporter FPSE_09185 from Fusarium pseudograminearum (strain CS3096) (Wheat and barley crown-rot fungus).